The sequence spans 194 residues: CASP-like protein 2C2 (194 aa).

Residues 1–27 lie on the Cytoplasmic side of the membrane; it reads MAAGQPRPPPPPSSVRTERVLRAACAA. Residues 28–48 form a helical membrane-spanning segment; sequence MAAAGALLLGFSAETKTVIFV. The Extracellular segment spans residues 49 to 58; that stretch reads QKKAVPKDVQ. Residues 59 to 79 form a helical membrane-spanning segment; the sequence is ALWVLIVAAAAAAAYHAAQLA. The Cytoplasmic portion of the chain corresponds to 80 to 113; sequence RCLCMDRLAGGGGGCRRLRRAVACATFLLDKGCA. Residues 114–134 traverse the membrane as a helical segment; the sequence is YMVLATTVAALQACFVGLLGV. The Extracellular segment spans residues 135–152; it reads EALQWSKLCNIYTRFCEQ. The chain crosses the membrane as a helical span at residues 153 to 173; sequence AAAGMVCSLVAAAGMAVLSAF. At 174-194 the chain is on the cytoplasmic side; sequence SARDLFRRRRPCSPCVQVQQV.

This sequence belongs to the Casparian strip membrane proteins (CASP) family. In terms of assembly, homodimer and heterodimers.

The protein localises to the cell membrane. The sequence is that of CASP-like protein 2C2 from Sorghum bicolor (Sorghum).